Here is a 151-residue protein sequence, read N- to C-terminus: Prefoldin subunit 5 (151 aa).

A coiled-coil region spans residues 15-35 (IDQLKALKEQADLEVNLLQDS).

The protein belongs to the prefoldin subunit alpha family. In terms of assembly, heterohexamer of two PFD-alpha type and four PFD-beta type subunits forming prefoldin co-chaperone complex. Interacts with PFD6. Binds to the DELLA protein GAI.

It localises to the cytoplasm. Its subcellular location is the nucleus. Binds specifically to cytosolic chaperonin (c-CPN) and transfers target proteins to it. Binds to nascent polypeptide chain and promotes folding in an environment in which there are many competing pathways for nonnative proteins. Together with other chaperonins, contribute to the regulation of gene expression by modulating the spliceosome function on pre-mRNA splicing post-transcriptionally by acting as a co-chaperone of Hsp90 to control levels of LSM8. Required for the biogenesis of tubulins and for subsequent microtubules (MTs) organization and dynamicity. Necessary for tolerance to NaCl salt stress. Involved in the process leading to microtubules dissociation in response to gibberellic acid (GA) probably due to the DELLA proteins-mediated translocation of the prefoldin co-chaperone complex from the cytoplasm to the nucleus. Prevents cold acclimation (e.g. 7 days at 4 degrees Celsius) in a DELLA proteins-dependent manner by promoting nuclear proteasome-mediated HY5 degradation, thus modulating the expression of several genes and reducing anthocyanin biosynthesis, but seems not involved in constitutive freezing tolerance. Contributes to the GA-dependent regulation of PIN2 trafficking at the plasma membrane, thus influencing auxin flux. This Arabidopsis thaliana (Mouse-ear cress) protein is Prefoldin subunit 5.